The following is a 496-amino-acid chain: Glycerol kinase 2 (496 aa).

Residue threonine 11 participates in ADP binding. ATP is bound by residues threonine 11, threonine 12, and serine 13. A sn-glycerol 3-phosphate-binding site is contributed by threonine 11. Arginine 15 serves as a coordination point for ADP. Sn-glycerol 3-phosphate contacts are provided by arginine 81, glutamate 82, tyrosine 133, and aspartate 242. Residues arginine 81, glutamate 82, tyrosine 133, aspartate 242, and glutamine 243 each contribute to the glycerol site. ADP is bound by residues threonine 264 and glycine 307. 4 residues coordinate ATP: threonine 264, glycine 307, glutamine 311, and glycine 408. 2 residues coordinate ADP: glycine 408 and asparagine 412.

The protein belongs to the FGGY kinase family.

The enzyme catalyses glycerol + ATP = sn-glycerol 3-phosphate + ADP + H(+). The protein operates within polyol metabolism; glycerol degradation via glycerol kinase pathway; sn-glycerol 3-phosphate from glycerol: step 1/1. Inhibited by fructose 1,6-bisphosphate (FBP). Key enzyme in the regulation of glycerol uptake and metabolism. Catalyzes the phosphorylation of glycerol to yield sn-glycerol 3-phosphate. This chain is Glycerol kinase 2, found in Thermotoga maritima (strain ATCC 43589 / DSM 3109 / JCM 10099 / NBRC 100826 / MSB8).